Here is a 262-residue protein sequence, read N- to C-terminus: tRNA U34 carboxymethyltransferase (262 aa).

Residues Lys25, Trp39, Lys44, Gly63, 114–115, Tyr135, and Arg250 each bind carboxy-S-adenosyl-L-methionine; that span reads VE.

This sequence belongs to the class I-like SAM-binding methyltransferase superfamily. CmoB family. As to quaternary structure, homotetramer.

It catalyses the reaction carboxy-S-adenosyl-L-methionine + 5-hydroxyuridine(34) in tRNA = 5-carboxymethoxyuridine(34) in tRNA + S-adenosyl-L-homocysteine + H(+). In terms of biological role, catalyzes carboxymethyl transfer from carboxy-S-adenosyl-L-methionine (Cx-SAM) to 5-hydroxyuridine (ho5U) to form 5-carboxymethoxyuridine (cmo5U) at position 34 in tRNAs. The protein is tRNA U34 carboxymethyltransferase of Helicobacter acinonychis (strain Sheeba).